We begin with the raw amino-acid sequence, 1276 residues long: MNIDSNIIKNENLINANNHTDRRDVHDSLAEAPEKITELKKNHWEELLPSSSNWYCTSVADCNENQIYIYACKSNVSIFNIKSKKFIGELNGHTDRVTSVGFFKRFESKNDESYKWCITGSDDKTVRIWKFNSNDDDHNEDTEIGDDFKHGSGGGGSDGGGGDDVNNFYGNKSSNFCIYYHQEHKAGVTCVVASPLVPDLVLSGDKAGALVIYRTLTNHVFPIPPIIGNNISISTLAFSPNHSDLVAIGYLNGIVLIYNFVIRSTVCKISAHSADVLSIVWFDSTIIQKNNIFHDNNINDQDDNNSNHRNRIFLATCSKDKAIKIWKQVGEKIESGFTNIYQFNPSKYSIQHSSSSGGGGINQNDKQRVWLTLSWSPESPQYLLSNSLTADVLIWDLINFKSPPEKFQSSHQRLIFNITQIPNSDGSLAKTTATTETTTKNKIKNKDKKQSQIKLNNKVITVSLDRQIIIWENLKAKIKIQGLGGFVYSIDTCSYSPNTFAIGCGDNTIRLWSPTENSKDAYESKTLWKGIQSKVTSLSICKDYGFSNSNLIAFGMDDGRVGVYNINTNQSKIFPGGHKNEIYEIIWKPPPTPTPQKNINNNNNNNNNNNNNNNNNNNNNNNNNNNNNNNNNNNNINNNNNNNSNNEQQPNKLYSIGNNEIYEWDYNDFNKSFTNMTPIIQQLNPKETFSKHKTDINFNLNGDMISIGYSDGTIDIFTSEFLFLTRIREHKKLINRVQWNHFKENEMILASASTDKKVIIYKLSKIGNQNENEKKIDNEKGKENENEKGKENENENENENENENENENENEIENIVNNNNENDTEIEIKNINKNENVDKEEMVENNNNNNIKYKIEILHQFIGHKNNVCSVSWSNVDPNLLGSASADGTVQVWNIKSKEAISNMRGHDGRVFTVCWSLLDPNLLVSGGEDQTVRLWNYSTQPFKTVTESQIKKSPQPELSISLNKKITEQQQQQQQPQSPIKSNPDQSNNPSLVPPILLTSVTSTSNTTATATTITQITESLPKKRPIFLLNKDIVQRQDSSQYVVPLAKYFTTNDQDSINTNETKQEYEFGSNSENNNSKIEAIFSEKKEIINKLVQKESLELLKIDDVENYISLNSWNPANLKQALYQVIKNGKLTGNIVSLSIQAGREIFESICNLYSQQLICIGDYHLAVSYLLMIGKVNEAIEVYRNTLLFQEAIILAKSRFLPDDPIINKLFTEWAKQTETSHPIHSIKCYLATINDQSLNSKQELLKLLSSVQTKQIIKIQSDLEQILK.

Positions 53–55 (NWY) are interaction with U4 snRNA. 8 WD repeats span residues 92-139 (GHTD…DDHN), 183-223 (EHKA…VFPI), 228-268 (GNNI…TVCK), 271-336 (AHSA…IESG), 364-405 (NDKQ…SPPE), 438-481 (TTKN…IKIQ), 485-522 (GFVY…KDAY), and 530-574 (GIQS…SKIF). The disordered stretch occupies residues 138-157 (HNEDTEIGDDFKHGSGGGGS). Residues 586–652 (IWKPPPTPTP…NSNNEQQPNK (67 aa)) form a disordered region. Low complexity predominate over residues 598-646 (NINNNNNNNNNNNNNNNNNNNNNNNNNNNNNNNNNNNNINNNNNNNSNN). 2 WD repeats span residues 688 to 727 (TFSK…LTRI) and 729 to 771 (EHKK…NQNE). Residues 772 to 793 (NEKKIDNEKGKENENEKGKENE) are compositionally biased toward basic and acidic residues. The segment at 772-809 (NEKKIDNEKGKENENEKGKENENENENENENENENENE) is disordered. Residues 778 to 829 (NEKGKENENEKGKENENENENENENENENENENEIENIVNNNNENDTEIEIK) are a coiled coil. The span at 794–809 (NENENENENENENENE) shows a compositional bias: acidic residues. WD repeat units follow at residues 863-903 (GHKN…AISN) and 906-946 (GHDG…FKTV). Residues 967–997 (ITEQQQQQQQPQSPIKSNPDQSNNPSLVPPI) are disordered. The span at 979–992 (SPIKSNPDQSNNPS) shows a compositional bias: polar residues.

Belongs to the WD repeat gemin-5 family. Part of the core SMN complex.

The protein resides in the nucleus. Its subcellular location is the nucleoplasm. The protein localises to the gem. It is found in the cytoplasm. The SMN complex catalyzes the assembly of small nuclear ribonucleoproteins (snRNPs), the building blocks of the spliceosome, and thereby plays an important role in the splicing of cellular pre-mRNAs. Most spliceosomal snRNPs contain a common set of Sm proteins SNRPB, SNRPD1, SNRPD2, SNRPD3, SNRPE, SNRPF and SNRPG that assemble in a heptameric protein ring on the Sm site of the small nuclear RNA to form the core snRNP (Sm core). In the cytosol, the Sm proteins SNRPD1, SNRPD2, SNRPE, SNRPF and SNRPG are trapped in an inactive 6S pICln-Sm complex by the chaperone CLNS1A that controls the assembly of the core snRNP. To assemble core snRNPs, the SMN complex accepts the trapped 5Sm proteins from CLNS1A forming an intermediate. Binding of snRNA inside 5Sm ultimately triggers eviction of the SMN complex, thereby allowing binding of SNRPD3 and SNRPB to complete assembly of the core snRNP. Within the SMN complex, GEMIN5 recognizes and delivers the small nuclear RNAs (snRNAs) to the SMN complex. Binds to the 7-methylguanosine cap of RNA molecules. This chain is Component of gems protein 5 (gemin5), found in Dictyostelium discoideum (Social amoeba).